A 232-amino-acid chain; its full sequence is MAKLSKRLQAFASKVDRQKLYAIEEALSLVKECASAKFDESIDVAVQLGIDAKKSDQVVRGSVVLPAGTGKSVRVAVFAQGEKAEQARAAGAEIVGMEDLAEQVKAGNLNFDVVIASPDTMRVVGTLGQILGPRGLMPNPKVGTVTPDVATAVKNAKAGQVQFRVDKAGIIHATIGRASFEPTALRSNLNALVEALQKAKPATSKGVYLRKIALSSTMGVGVRVDQATLAAQ.

It belongs to the universal ribosomal protein uL1 family. Part of the 50S ribosomal subunit.

In terms of biological role, binds directly to 23S rRNA. The L1 stalk is quite mobile in the ribosome, and is involved in E site tRNA release. Functionally, protein L1 is also a translational repressor protein, it controls the translation of the L11 operon by binding to its mRNA. The protein is Large ribosomal subunit protein uL1 of Paraburkholderia phymatum (strain DSM 17167 / CIP 108236 / LMG 21445 / STM815) (Burkholderia phymatum).